Here is a 544-residue protein sequence, read N- to C-terminus: uncharacterized protein (544 aa).

14 consecutive transmembrane segments (helical) span residues 31-51 (ILVFYLLFFLTDVAGIPAALA), 52-72 (GSVLMIGKIFDAINDPIIGLL), 84-104 (LPWMLGGMIPFALFYTAQWLI), 116-136 (WGLFIYYVAIAMAFNLCYTTV), 162-182 (FAFSIGGSILSLILYILIAAG), 191-211 (FGELGVMISVLSISALLWSAL), 230-250 (LAPLLMAAGITLILLAIAKSF), 257-277 (GFDYISFFLILLGLIWGGFGF), 318-338 (FLFVIGIYLCSWLAVQLTASI), 356-376 (TIALAVQGTALVMLFVWQALA), 383-403 (VIYFLGSMVWMGAEAGLWLVQ), 407-427 (VALLYTLAIFAGVGVSVAYLI), 450-470 (FFYAFMVLLQKVGLALGLFLV), and 501-521 (FAVAPLPAFFLLGGLILAIFY).

It belongs to the sodium:galactoside symporter (TC 2.A.2) family.

The protein localises to the cell membrane. This is an uncharacterized protein from Synechocystis sp. (strain ATCC 27184 / PCC 6803 / Kazusa).